The chain runs to 747 residues: WD repeat-containing protein 91 (747 aa).

Positions 183–227 (QRTNQVQEENEVLRQKLFALQAEVHRLKKEEQQQEEAAALVQHKL) form a coiled coil. Serine 256 carries the post-translational modification Phosphoserine. The segment covering 265–278 (LLPQSKKSPSRLSP) has biased composition (low complexity). A disordered region spans residues 265–358 (LLPQSKKSPS…SQTQCAEKKL (94 aa)). Over residues 283–299 (PQAQSSAKKDTFSSQAT) the composition is skewed to polar residues. A Phosphoserine modification is found at serine 288. Basic and acidic residues predominate over residues 332 to 343 (RLQDHGKERREL). Over residues 344 to 353 (LSTSSSQTQC) the composition is skewed to polar residues. 7 WD repeats span residues 406–445 (EHHSSIMHCRVDCSGRRVASLDVDGVIKVWSFNPIMQTKA), 448–488 (ISKS…NLCE), 511–555 (VCSA…QQLQ), 560–599 (PEPIAINCTAFNHNGNLLVTGAADGVIRLFDMQQHGCAMS), 602–641 (AHCGEVYSVEFSYDENAVNSIGEDGKFIQWNIHKSGLKVS), 664–702 (VQVPRGRLFAFDSEGNYMLTCSATGGLIYKLGSEEKVLE), and 709–747 (GHRAPVVTVDWSTAMDCGTCLTASMDGKIKLTTLLAHKL).

This sequence belongs to the WD repeat WDR91 family. In terms of assembly, interacts with WDR81; involved in early to late endosome cargo transport. Interacts with BECN1; negatively regulates the PI3 kinase/PI3K activity associated with endosomal membranes.

It is found in the early endosome membrane. The protein resides in the late endosome membrane. Its function is as follows. Functions as a negative regulator of the PI3 kinase/PI3K activity associated with endosomal membranes via BECN1, a core subunit of the PI3K complex. By modifying the phosphatidylinositol 3-phosphate/PtdInsP3 content of endosomal membranes may regulate endosome fusion, recycling, sorting and early to late endosome transport. It is for instance, required for the delivery of cargos like BST2/tetherin from early to late endosome and thereby participates indirectly to their degradation by the lysosome. May play a role in meiosis. This is WD repeat-containing protein 91 from Rattus norvegicus (Rat).